The following is a 238-amino-acid chain: Ribonuclease PH (238 aa).

Phosphate-binding positions include Arg86 and Gly124–Arg126.

It belongs to the RNase PH family. Homohexameric ring arranged as a trimer of dimers.

It carries out the reaction tRNA(n+1) + phosphate = tRNA(n) + a ribonucleoside 5'-diphosphate. Phosphorolytic 3'-5' exoribonuclease that plays an important role in tRNA 3'-end maturation. Removes nucleotide residues following the 3'-CCA terminus of tRNAs; can also add nucleotides to the ends of RNA molecules by using nucleoside diphosphates as substrates, but this may not be physiologically important. Probably plays a role in initiation of 16S rRNA degradation (leading to ribosome degradation) during starvation. This chain is Ribonuclease PH, found in Serratia proteamaculans (strain 568).